A 304-amino-acid polypeptide reads, in one-letter code: 5-hmdU DNA kinase 2 (304 aa).

Positions 260–304 (VGGQDPLAHRVPEKPQKASKTKNKAVAKEEPKTSSVSLLGLMRKA) are disordered. Over residues 266-275 (LAHRVPEKPQ) the composition is skewed to basic and acidic residues.

Belongs to the thymidylate kinase family. 5-hmdU DNA kinase subfamily.

The catalysed reaction is 5-hydroxymethyl-dUMP in DNA + ATP = 5-phosphomethyl-dUMP in DNA + ADP + H(+). Its function is as follows. Phosphorylates 5-hydroxymethyluracil (5hmdU) into 5-phosphomethyl-2'-deoxyuridine (5- PmdU) on DNA as a step in the pathway leading to thymidine hypermodifications in the viral genome. The phosphate is added internally to the DNA polymer. As a final result of the pathway of hypermodification, 5-aminoethoxy-2'-deoxymethyluridine (5-NeOmdU) substitutes for about 40% of the thymidines in the viral DNA. These modifications probably prevent degradation of viral genome by the host restriction-modification antiviral defense system. The protein is 5-hmdU DNA kinase 2 of Salmonella typhi.